The following is a 428-amino-acid chain: Adenylosuccinate synthetase (428 aa).

Residues 12–18 (GDEGKGK) and 40–42 (GHS) each bind GTP. Asp13 serves as the catalytic Proton acceptor. Mg(2+) is bound by residues Asp13 and Gly40. IMP contacts are provided by residues 13–16 (DEGK), 38–41 (NAGH), Thr128, Arg142, Gln223, Thr238, and Arg302. Residue His41 is the Proton donor of the active site. A substrate-binding site is contributed by 298–304 (VTTGRPR). GTP is bound by residues Arg304, 330-332 (KLD), and 412-414 (GTG).

It belongs to the adenylosuccinate synthetase family. As to quaternary structure, homodimer. Mg(2+) serves as cofactor.

Its subcellular location is the cytoplasm. The catalysed reaction is IMP + L-aspartate + GTP = N(6)-(1,2-dicarboxyethyl)-AMP + GDP + phosphate + 2 H(+). The protein operates within purine metabolism; AMP biosynthesis via de novo pathway; AMP from IMP: step 1/2. Plays an important role in the de novo pathway of purine nucleotide biosynthesis. Catalyzes the first committed step in the biosynthesis of AMP from IMP. In Bifidobacterium longum subsp. infantis (strain ATCC 15697 / DSM 20088 / JCM 1222 / NCTC 11817 / S12), this protein is Adenylosuccinate synthetase.